Here is a 361-residue protein sequence, read N- to C-terminus: Putative F-box protein At3g25460 (361 aa).

The F-box domain maps to 1–45; the sequence is MMMPELPEDLLVEILCRVPATSLKRLRSTCKLWNHLYNDKRFKSK.

This chain is Putative F-box protein At3g25460, found in Arabidopsis thaliana (Mouse-ear cress).